The primary structure comprises 376 residues: uncharacterized protein (376 aa).

The protein belongs to the mimivirus R1 family.

This is an uncharacterized protein from Acanthamoeba polyphaga (Amoeba).